A 704-amino-acid chain; its full sequence is Protein polyglycylase TTLL10 (704 aa).

Disordered regions lie at residues 1-32, 46-125, and 137-170; these read MALH…LPSP, GHRA…SVKE, and DADD…PGQG. Over residues 93-105 the composition is skewed to basic residues; sequence VSSKRSKRSRIHP. A compositionally biased stretch (basic and acidic residues) spans 114-125; the sequence is THEKQMGSSVKE. Positions 169-540 constitute a TTL domain; the sequence is QGPFFYIGGT…TCQKSLHSQK (372 aa). Residues K301, 307 to 308, 350 to 353, 363 to 365, and 406 to 407 contribute to the ATP site; these read QG, QRYV, KFD, and TN. An a protein-binding site is contributed by Q307. Mg(2+) is bound by residues D486, E499, and N501. Residues 565-704 are disordered; it reads LASSRPLNRL…EQRSTSHRGS (140 aa). Pro residues-rich tracts occupy residues 576 to 588 and 596 to 612; these read NPNP…ANPH and HPHP…PPRP. 2 stretches are compositionally biased toward low complexity: residues 616–629 and 654–667; these read AASS…AAIS and SDSS…SEPS.

The cofactor is Mg(2+). Highly expressed in testis. Expressed in brain, heart, kidney, liver, lung, muscle and trachea.

The protein resides in the cytoplasm. Its subcellular location is the cytoskeleton. It localises to the cell projection. The protein localises to the cilium. It is found in the cilium axoneme. It carries out the reaction (glycyl)(n)-glycyl-L-glutamyl-[protein] + glycine + ATP = (glycyl)(n+1)-glycyl-L-glutamyl-[protein] + ADP + phosphate + H(+). Polyglycylase which modifies both tubulin and non-tubulin proteins, generating polyglycine side chains of variable lengths on the gamma-carboxyl groups of specific glutamate residues of target proteins. Involved in the elongation step rather than the initiation step of the polyglycylation reaction. Polyglycylates alpha-tubulin and beta-tubulin. Polyglycylates non-tubulin proteins such as nucleosome assembly protein NAP1. This chain is Protein polyglycylase TTLL10, found in Mus musculus (Mouse).